A 386-amino-acid polypeptide reads, in one-letter code: Enamidase (386 aa).

Positions 67, 69, and 164 each coordinate Zn(2+). Residues E164, H193, and H220 each contribute to the Fe cation site. A Zn(2+)-binding site is contributed by D276.

As to quaternary structure, homotetramer. Dimer of dimers. Requires Fe cation as cofactor. Zn(2+) serves as cofactor.

The catalysed reaction is 1,4,5,6-tetrahydro-6-oxonicotinate + 2 H2O = 2-formylglutarate + NH4(+). It participates in cofactor degradation; nicotinate degradation; propanoate and pyruvate from 6-hydroxynicotinate: step 2/8. Its function is as follows. Decyclization of 6-oxo-1,4,5,6-tetrahydronicotinate to form 2-(enamine)glutarate, followed by hydrolysis to form (S)-2-formylglutarate. This chain is Enamidase, found in Eubacterium barkeri (Clostridium barkeri).